Reading from the N-terminus, the 481-residue chain is MADATNPPLVYQVPEMRRIRRIHFVGIGGAGMSGIAEVLKNQGYDVSGSDIRDSAVTARLRAMDVDVYIGHRAENTDQADVVVVSSAVAGDNPEVVSARERRVPIVPRAEMLAEIMRYRHGIAVAGTHGKTTTTSLIASVLGEAGLDPTFVIGGKLNSAGTNAQLGGSRYLVAEADESDASFLHLTPVISVVTNIEADHMDTYGGDVEKLKQTFVDFLHNLPFYGVAVMCVDDDYVQEIIPRISRAIITYGIDNPDADYRAENITSDGLKTRFLVRRPGGRPDLQVELKMPGRHNVLNALATIAVATDEGVDDQAICRGLAGFAGVGRRFQVYGEYRTPKAAATLVDDYGHHPTEVEAVIRAAREAWPQRRIVMLYQPHRYTRTRDLYEDFVRVLSEVDGLLLMDVYSAGEPAIPGADGRALCRSIRQRGKVEPVFVEDNREIESLLANVLQDGDLLITQGAGDIGGVAARLAAAGVKASE.

126-132 (GTHGKTT) contacts ATP.

The protein belongs to the MurCDEF family.

It is found in the cytoplasm. The enzyme catalyses UDP-N-acetyl-alpha-D-muramate + L-alanine + ATP = UDP-N-acetyl-alpha-D-muramoyl-L-alanine + ADP + phosphate + H(+). Its pathway is cell wall biogenesis; peptidoglycan biosynthesis. Functionally, cell wall formation. The sequence is that of UDP-N-acetylmuramate--L-alanine ligase from Marinobacter nauticus (strain ATCC 700491 / DSM 11845 / VT8) (Marinobacter aquaeolei).